Here is a 367-residue protein sequence, read N- to C-terminus: MTSTQRTLMVMAGGTGGHVFPGLAVAHRMQAQGWRVVWLGNPAGMEATLVPRHGIPMEYVRFGGLRGKGLATKFALPFNLLRACAQSLRALRRVKPDVVLGMGGYITFPAGLVTVLTGRPLVLHEQNSIAGLTNKVLAKLAKRVLVAFPGALPNAEWTGNPIRTELARTEPPQARYAARSGKLRLLVVGGSLGAAALNEVVPRALALLAPDERPQVVHQAGAKHIDTLKENYEAAGLSCGSDVALVPFIDDMASAYANADLVICRSGAMTVAEIAAVGVAALFVPFPHAVDDHQTTNAEFLAEQGAAVLVQQRDLSAELLADWLRGQSRDSLAAMAERSRSLAKPDATDEVARVCAAVAGANQEGKQ.

Residues 15-17, asparagine 127, arginine 163, serine 191, isoleucine 249, and glutamine 294 contribute to the UDP-N-acetyl-alpha-D-glucosamine site; that span reads TGG.

This sequence belongs to the glycosyltransferase 28 family. MurG subfamily.

It localises to the cell inner membrane. The enzyme catalyses di-trans,octa-cis-undecaprenyl diphospho-N-acetyl-alpha-D-muramoyl-L-alanyl-D-glutamyl-meso-2,6-diaminopimeloyl-D-alanyl-D-alanine + UDP-N-acetyl-alpha-D-glucosamine = di-trans,octa-cis-undecaprenyl diphospho-[N-acetyl-alpha-D-glucosaminyl-(1-&gt;4)]-N-acetyl-alpha-D-muramoyl-L-alanyl-D-glutamyl-meso-2,6-diaminopimeloyl-D-alanyl-D-alanine + UDP + H(+). It participates in cell wall biogenesis; peptidoglycan biosynthesis. Functionally, cell wall formation. Catalyzes the transfer of a GlcNAc subunit on undecaprenyl-pyrophosphoryl-MurNAc-pentapeptide (lipid intermediate I) to form undecaprenyl-pyrophosphoryl-MurNAc-(pentapeptide)GlcNAc (lipid intermediate II). The chain is UDP-N-acetylglucosamine--N-acetylmuramyl-(pentapeptide) pyrophosphoryl-undecaprenol N-acetylglucosamine transferase from Burkholderia pseudomallei (strain 668).